Here is a 380-residue protein sequence, read N- to C-terminus: Serpin B7 (380 aa).

A phosphoserine mark is found at Ser217 and Ser223.

The protein belongs to the serpin family. Ov-serpin subfamily. In terms of tissue distribution, predominantly expressed in mesangial cells. Expressed in the epidermis of the whole body.

It is found in the cytoplasm. Its function is as follows. Might function as an inhibitor of Lys-specific proteases. Might influence the maturation of megakaryocytes via its action as a serpin. The chain is Serpin B7 (SERPINB7) from Homo sapiens (Human).